The primary structure comprises 250 residues: LOB domain-containing protein 37 (250 aa).

Residues 1-107 enclose the LOB domain; that stretch reads MSCNGCRVLR…VETVLRGGSL (107 aa). Residues 145-227 form a disordered region; that stretch reads DSTDRNIYHH…DSGTTTTTTA (83 aa). Positions 157-170 are enriched in low complexity; that stretch reads FSSSRSRSTMDSSS.

Belongs to the LOB domain-containing protein family. In terms of tissue distribution, expressed in young shoots, roots, stems, leaves and flowers.

The sequence is that of LOB domain-containing protein 37 (LBD37) from Arabidopsis thaliana (Mouse-ear cress).